The primary structure comprises 478 residues: Catalase (478 aa).

Residues Met1–Gly23 are disordered. Active-site residues include His53 and Asn126. Position 336 (Tyr336) interacts with heme.

The protein belongs to the catalase family. It depends on heme as a cofactor.

The protein resides in the cytoplasm. The catalysed reaction is 2 H2O2 = O2 + 2 H2O. In terms of biological role, decomposes hydrogen peroxide into water and oxygen; serves to protect cells from the toxic effects of hydrogen peroxide. The sequence is that of Catalase (katA) from Latilactobacillus sakei (Lactobacillus sakei).